Here is a 237-residue protein sequence, read N- to C-terminus: Phosphoribosylaminoimidazole-succinocarboxamide synthase (237 aa).

The protein belongs to the SAICAR synthetase family.

The enzyme catalyses 5-amino-1-(5-phospho-D-ribosyl)imidazole-4-carboxylate + L-aspartate + ATP = (2S)-2-[5-amino-1-(5-phospho-beta-D-ribosyl)imidazole-4-carboxamido]succinate + ADP + phosphate + 2 H(+). It participates in purine metabolism; IMP biosynthesis via de novo pathway; 5-amino-1-(5-phospho-D-ribosyl)imidazole-4-carboxamide from 5-amino-1-(5-phospho-D-ribosyl)imidazole-4-carboxylate: step 1/2. The sequence is that of Phosphoribosylaminoimidazole-succinocarboxamide synthase from Pseudomonas fluorescens (strain ATCC BAA-477 / NRRL B-23932 / Pf-5).